The chain runs to 512 residues: UDP-N-acetylmuramate--L-alanine ligase (512 aa).

132–138 (GAHGKTT) contributes to the ATP binding site.

This sequence belongs to the MurCDEF family.

It is found in the cytoplasm. It catalyses the reaction UDP-N-acetyl-alpha-D-muramate + L-alanine + ATP = UDP-N-acetyl-alpha-D-muramoyl-L-alanine + ADP + phosphate + H(+). It functions in the pathway cell wall biogenesis; peptidoglycan biosynthesis. Functionally, cell wall formation. The sequence is that of UDP-N-acetylmuramate--L-alanine ligase from Bifidobacterium longum subsp. infantis (strain ATCC 15697 / DSM 20088 / JCM 1222 / NCTC 11817 / S12).